The following is a 1018-amino-acid chain: Unconventional myosin-Ig (1018 aa).

The residue at position 1 (methionine 1) is an N-acetylmethionine. Positions 9–707 (YGKPDFVLLD…TLVTLEQSRA (699 aa)) constitute a Myosin motor domain. Position 102–109 (102–109 (GESGAGKT)) interacts with ATP. Positions 584–606 (MVALVENLASKEPFYVRCIKPNE) are actin-binding. The region spanning 710–739 (IPIIVLLLQKAWRGTLARWRCRRLRAIYTI) is the IQ domain. The 194-residue stretch at 824 to 1017 (GLRQDWGCRR…RGSFTLLWPS (194 aa)) folds into the TH1 domain.

The protein belongs to the TRAFAC class myosin-kinesin ATPase superfamily. Myosin family. In terms of assembly, interacts with calmodulin; via its IQ motifs. Specifically expressed in hematopoietic cells.

It is found in the cell membrane. It localises to the cell projection. The protein localises to the phagocytic cup. Functionally, unconventional myosin required during immune response for detection of rare antigen-presenting cells by regulating T-cell migration. Unconventional myosins are actin-based motor molecules with ATPase activity and serve in intracellular movements. Acts as a regulator of T-cell migration by generating membrane tension, enforcing cell-intrinsic meandering search, thereby enhancing detection of rare antigens during lymph-node surveillance, enabling pathogen eradication. Also required in B-cells, where it regulates different membrane/cytoskeleton-dependent processes. Involved in Fc-gamma receptor (Fc-gamma-R) phagocytosis. Constitutes the minor histocompatibility antigen HA-2. More generally, minor histocompatibility antigens (mHags) refer to immunogenic peptide which, when complexed with MHC, can generate an immune response after recognition by specific T-cells. The peptides are derived from polymorphic intracellular proteins, which are cleaved by normal pathways of antigen processing. The binding of these peptides to MHC class I or class II molecules and their expression on the cell surface can stimulate T-cell responses and thereby trigger graft rejection or graft-versus-host disease (GVHD) after hematopoietic stem cell transplantation from HLA-identical sibling donor. GVHD is a frequent complication after bone marrow transplantation (BMT), due to mismatch of minor histocompatibility antigen in HLA-matched sibling marrow transplants. HA-2 is restricted to MHC class I HLA-A*0201. The sequence is that of Unconventional myosin-Ig (MYO1G) from Homo sapiens (Human).